The sequence spans 256 residues: 3-hydroxy-5-phosphonooxypentane-2,4-dione thiolase (256 aa).

Lys168 functions as the Schiff-base intermediate with substrate in the catalytic mechanism.

Belongs to the DeoC/FbaB aldolase family. In terms of assembly, homodecamer.

The protein localises to the cytoplasm. The catalysed reaction is dihydroxyacetone phosphate + acetyl-CoA = 3-hydroxy-2,4-dioxopentyl phosphate + CoA. Involved in the degradation of phospho-AI-2, thereby terminating induction of the lsr operon and closing the AI-2 signaling cycle. Catalyzes the transfer of an acetyl moiety from 3-hydroxy-5-phosphonooxypentane-2,4-dione to CoA to form glycerone phosphate and acetyl-CoA. In Shigella flexneri serotype 5b (strain 8401), this protein is 3-hydroxy-5-phosphonooxypentane-2,4-dione thiolase (lsrF).